We begin with the raw amino-acid sequence, 351 residues long: Dihydroorotate dehydrogenase (quinone) (351 aa).

FMN contacts are provided by residues 61 to 65 (AGLDK) and threonine 85. Residue lysine 65 participates in substrate binding. 110–114 (NRMGF) provides a ligand contact to substrate. Residues asparagine 139 and asparagine 172 each contribute to the FMN site. Asparagine 172 contacts substrate. The Nucleophile role is filled by serine 175. Residue asparagine 177 coordinates substrate. Positions 217 and 245 each coordinate FMN. 246–247 (NT) contributes to the substrate binding site. FMN contacts are provided by residues glycine 268, glycine 297, and 318–319 (YS).

It belongs to the dihydroorotate dehydrogenase family. Type 2 subfamily. As to quaternary structure, monomer. It depends on FMN as a cofactor.

It is found in the cell membrane. It carries out the reaction (S)-dihydroorotate + a quinone = orotate + a quinol. It functions in the pathway pyrimidine metabolism; UMP biosynthesis via de novo pathway; orotate from (S)-dihydroorotate (quinone route): step 1/1. Its function is as follows. Catalyzes the conversion of dihydroorotate to orotate with quinone as electron acceptor. In Stenotrophomonas maltophilia (strain R551-3), this protein is Dihydroorotate dehydrogenase (quinone).